A 328-amino-acid chain; its full sequence is Malate dehydrogenase (328 aa).

Residue 12–18 (GAAGQIG) coordinates NAD(+). 2 residues coordinate substrate: arginine 95 and arginine 101. Residues asparagine 108, glutamine 115, and 132–134 (VGN) contribute to the NAD(+) site. Residues asparagine 134 and arginine 165 each contribute to the substrate site. Histidine 190 functions as the Proton acceptor in the catalytic mechanism.

Belongs to the LDH/MDH superfamily. MDH type 2 family.

The catalysed reaction is (S)-malate + NAD(+) = oxaloacetate + NADH + H(+). Catalyzes the reversible oxidation of malate to oxaloacetate. In Paracidovorax citrulli (strain AAC00-1) (Acidovorax citrulli), this protein is Malate dehydrogenase.